Reading from the N-terminus, the 318-residue chain is Taste receptor type 2 member 60 (318 aa).

Residues M1–V7 are Extracellular-facing. Residues L8 to R28 traverse the membrane as a helical segment. Over L29 to A40 the chain is Cytoplasmic. A helical membrane pass occupies residues A41–S61. The Extracellular segment spans residues L62–P88. Residues Y89–W109 traverse the membrane as a helical segment. At F110–P128 the chain is on the cytoplasmic side. The chain crosses the membrane as a helical span at residues V129 to V149. Topologically, residues G150–N183 are extracellular. Residue N179 is glycosylated (N-linked (GlcNAc...) asparagine). Residues S184–M204 form a helical membrane-spanning segment. The Cytoplasmic portion of the chain corresponds to P205–F234. The chain crosses the membrane as a helical span at residues R235 to L255. Residues F256–V264 are Extracellular-facing. A helical transmembrane segment spans residues F265–I285. Residues Y286 to P318 are Cytoplasmic-facing.

The protein belongs to the G-protein coupled receptor T2R family.

It localises to the membrane. Functionally, receptor that may play a role in the perception of bitterness and is gustducin-linked. May play a role in sensing the chemical composition of the gastrointestinal content. The activity of this receptor may stimulate alpha gustducin, mediate PLC-beta-2 activation and lead to the gating of TRPM5. The polypeptide is Taste receptor type 2 member 60 (TAS2R60) (Pan paniscus (Pygmy chimpanzee)).